Reading from the N-terminus, the 128-residue chain is Methylglyoxal synthase (128 aa).

Residues 1-128 form the MGS-like domain; that stretch reads MRIALIAHDR…MQDHPGNRQA (128 aa). Substrate contacts are provided by residues His-8, Lys-12, 34–37, and 54–55; these read TGTT and SG. The active-site Proton donor/acceptor is Asp-60. His-87 contributes to the substrate binding site.

Belongs to the methylglyoxal synthase family.

The enzyme catalyses dihydroxyacetone phosphate = methylglyoxal + phosphate. Functionally, catalyzes the formation of methylglyoxal from dihydroxyacetone phosphate. The protein is Methylglyoxal synthase of Moorella thermoacetica (strain ATCC 39073 / JCM 9320).